Reading from the N-terminus, the 82-residue chain is uncharacterized protein (82 aa).

Functionally, this protein may be involved in virus assembly. This is an uncharacterized protein from Sulfolobus spindle-shape virus 1 (SSV1).